The chain runs to 316 residues: Nucleotide-binding protein NFA_35930 (316 aa).

Residue 32–39 (GLSGAGRG) participates in ATP binding. Position 83 to 86 (83 to 86 (DVRS)) interacts with GTP.

Belongs to the RapZ-like family.

Functionally, displays ATPase and GTPase activities. The protein is Nucleotide-binding protein NFA_35930 of Nocardia farcinica (strain IFM 10152).